The chain runs to 222 residues: MCGRFAQSQTREDYLALLAEDIERDIPYDPEPIGRYNVAPGTKVLLLSERDEHLHLDPVFWGYAPGWWDKPPLINARVETAATSRMFKPLWQHGRAICFADGWFEWKKEGDKKQPFFIYRADGQPIFMAAIGSTPFERGDEAEGFLIVTAAADQGLVDIHDRRPLVLSPEAAREWMRQEISGKEASEIAASGCVPANQFSWHPVSRAVGNVKNQGAELIQPV.

The Nucleophile role is filled by Cys2. The residue at position 2 (Cys2) is a Thiazolidine linkage to a ring-opened DNA abasic site. Residue Glu105 is part of the active site.

The protein belongs to the SOS response-associated peptidase family.

Formation and reversal of DNA-protein cross-link depends on DNA context. Catalyzes formation of the thiazolidine linkage in presence of abasic sites in single-stranded DNA. Mediates the reversal of the thiazolidine cross-link in presence of double stranded DNA. Functionally, sensor of abasic sites in single-stranded DNA (ssDNA) required to preserve genome integrity by promoting error-free repair of abasic sites. Recognizes and binds abasic sites in ssDNA at replication forks and chemically modifies the lesion by forming a covalent cross-link with DNA: forms a stable thiazolidine linkage between a ring-opened abasic site and the alpha-amino and sulfhydryl substituents of its N-terminal catalytic cysteine residue. The DNA-protein cross-link is then reversed: able to catalyze the reversal of the thiazolidine cross-link and cycle between a cross-link and a non-cross-linked state depending on DNA context: mediates self-reversal of the thiazolidine cross-link in double stranded DNA. May act as a protease: mediates autocatalytic processing of its N-terminal methionine in order to expose the catalytic cysteine. The sequence is that of Abasic site processing protein YedK from Escherichia coli (strain K12).